Reading from the N-terminus, the 460-residue chain is tRNA(Ile)-lysidine synthase (460 aa).

37 to 42 (SGGADS) serves as a coordination point for ATP.

It belongs to the tRNA(Ile)-lysidine synthase family.

It localises to the cytoplasm. It carries out the reaction cytidine(34) in tRNA(Ile2) + L-lysine + ATP = lysidine(34) in tRNA(Ile2) + AMP + diphosphate + H(+). Its function is as follows. Ligates lysine onto the cytidine present at position 34 of the AUA codon-specific tRNA(Ile) that contains the anticodon CAU, in an ATP-dependent manner. Cytidine is converted to lysidine, thus changing the amino acid specificity of the tRNA from methionine to isoleucine. The polypeptide is tRNA(Ile)-lysidine synthase (Treponema denticola (strain ATCC 35405 / DSM 14222 / CIP 103919 / JCM 8153 / KCTC 15104)).